The following is a 92-amino-acid chain: UPF0250 protein PD_0532 (92 aa).

This sequence belongs to the UPF0250 family.

The chain is UPF0250 protein PD_0532 from Xylella fastidiosa (strain Temecula1 / ATCC 700964).